Here is a 1105-residue protein sequence, read N- to C-terminus: Tubulin-folding cofactor D (1105 aa).

Residues Asn-122 and Asn-126 are each glycosylated (N-linked (GlcNAc...) asparagine). HEAT repeat units lie at residues 308-345 (IYLE…RLPW), 347-385 (LAEQ…WHGA), 401-446 (SKCL…CYSK), and 452-489 (LQTN…RHAS). N-linked (GlcNAc...) asparagine glycosylation occurs at Asn-373. N-linked (GlcNAc...) asparagine glycosylation is found at Asn-721, Asn-883, and Asn-1083.

As to quaternary structure, interacts with alp21.

It localises to the cytoplasm. The protein resides in the cytoskeleton. Its function is as follows. Has a function in the folding of beta-tubulin. Microtubule-associated protein that is essential to direct polarized cell growth and to position the nucleus and septum to the center of the cell during mitosis. This chain is Tubulin-folding cofactor D (alp1), found in Schizosaccharomyces pombe (strain 972 / ATCC 24843) (Fission yeast).